Consider the following 337-residue polypeptide: Glyceraldehyde-3-phosphate dehydrogenase (337 aa).

Residues 13 to 14, D35, and K80 each bind NAD(+); that span reads RI. D-glyceraldehyde 3-phosphate is bound by residues 151–153, T182, 211–212, and R234; these read SCT and TG. The active-site Nucleophile is C152. Position 316 (N316) interacts with NAD(+).

The protein belongs to the glyceraldehyde-3-phosphate dehydrogenase family. In terms of assembly, homotetramer.

It is found in the cytoplasm. The enzyme catalyses D-glyceraldehyde 3-phosphate + phosphate + NAD(+) = (2R)-3-phospho-glyceroyl phosphate + NADH + H(+). It functions in the pathway carbohydrate degradation; glycolysis; pyruvate from D-glyceraldehyde 3-phosphate: step 1/5. In Mycosarcoma maydis (Corn smut fungus), this protein is Glyceraldehyde-3-phosphate dehydrogenase (GAPD).